The following is an 88-amino-acid chain: Small ribosomal subunit protein bS20 (88 aa).

It belongs to the bacterial ribosomal protein bS20 family.

In terms of biological role, binds directly to 16S ribosomal RNA. This Desulforudis audaxviator (strain MP104C) protein is Small ribosomal subunit protein bS20.